The following is a 522-amino-acid chain: Peptide chain release factor 3 (522 aa).

One can recognise a tr-type G domain in the interval 9–276; the sequence is KKRRTFAIIS…SFVNLAPAPQ (268 aa). GTP-binding positions include 18-25, 86-90, and 140-143; these read SHPDAGKT, DTPGH, and NKLD.

Belongs to the TRAFAC class translation factor GTPase superfamily. Classic translation factor GTPase family. PrfC subfamily.

It localises to the cytoplasm. Its function is as follows. Increases the formation of ribosomal termination complexes and stimulates activities of RF-1 and RF-2. It binds guanine nucleotides and has strong preference for UGA stop codons. It may interact directly with the ribosome. The stimulation of RF-1 and RF-2 is significantly reduced by GTP and GDP, but not by GMP. The protein is Peptide chain release factor 3 of Lactobacillus gasseri (strain ATCC 33323 / DSM 20243 / BCRC 14619 / CIP 102991 / JCM 1131 / KCTC 3163 / NCIMB 11718 / NCTC 13722 / AM63).